A 438-amino-acid polypeptide reads, in one-letter code: 3-phosphoshikimate 1-carboxyvinyltransferase (438 aa).

Residues K21, S22, and R26 each contribute to the 3-phosphoshikimate site. K21 lines the phosphoenolpyruvate pocket. Residues G95 and R123 each coordinate phosphoenolpyruvate. Positions 167, 169, 315, and 342 each coordinate 3-phosphoshikimate. Q169 is a phosphoenolpyruvate binding site. The active-site Proton acceptor is D315. Phosphoenolpyruvate is bound by residues R346 and R387.

The protein belongs to the EPSP synthase family. Monomer.

The protein localises to the cytoplasm. The catalysed reaction is 3-phosphoshikimate + phosphoenolpyruvate = 5-O-(1-carboxyvinyl)-3-phosphoshikimate + phosphate. It functions in the pathway metabolic intermediate biosynthesis; chorismate biosynthesis; chorismate from D-erythrose 4-phosphate and phosphoenolpyruvate: step 6/7. Catalyzes the transfer of the enolpyruvyl moiety of phosphoenolpyruvate (PEP) to the 5-hydroxyl of shikimate-3-phosphate (S3P) to produce enolpyruvyl shikimate-3-phosphate and inorganic phosphate. The polypeptide is 3-phosphoshikimate 1-carboxyvinyltransferase (Coxiella burnetii (strain RSA 331 / Henzerling II)).